The primary structure comprises 90 residues: Arminin 45266 (90 aa).

Residues 1–20 (MKSASLILFVALVALTYARS) form the signal peptide. Positions 21-59 (YEDVKEEIKNEVEKEILDDLEEENDELDDNTQEVNDPRA) are excised as a propeptide. Position 87 is a threonine amide (threonine 87).

This sequence belongs to the arminin family. In terms of tissue distribution, expressed in entodermal epithelium along the body column.

The protein localises to the secreted. The protein resides in the target cell membrane. In terms of biological role, antimicrobial peptide with a broad-spectrum antimicrobial activity. Keeps its antibacterial activity under a wide range of salt concentrations that mimic physiological conditions of human blood, which is surprising, since Hydra is an obligate freshwater animal with nearly no salt tolerance. Does not affect red blood cells. The chain is Arminin 45266 from Hydra vulgaris (Hydra).